A 174-amino-acid polypeptide reads, in one-letter code: FMN reductase (NADH) SmoA (174 aa).

This sequence belongs to the non-flavoprotein flavin reductase family.

The enzyme catalyses FMNH2 + NAD(+) = FMN + NADH + 2 H(+). In terms of biological role, part of the sulfoquinovose monooxygenase (sulfo-SMO) pathway, a D-sulfoquinovose degradation pathway that enables the complete utilization of all carbons within sulfoquinovose (SQ) with concomitant production of inorganic sulfite. Catalyzes the NADH-dependent reduction of FMN. FMNH(2) is then transferred to the sulfoquinovose monooxygenase SmoC. This Agrobacterium fabrum (strain C58 / ATCC 33970) (Agrobacterium tumefaciens (strain C58)) protein is FMN reductase (NADH) SmoA.